The sequence spans 450 residues: UDP-N-acetylmuramoylalanine--D-glutamate ligase (450 aa).

Glycine 119–threonine 125 is an ATP binding site.

Belongs to the MurCDEF family.

Its subcellular location is the cytoplasm. The enzyme catalyses UDP-N-acetyl-alpha-D-muramoyl-L-alanine + D-glutamate + ATP = UDP-N-acetyl-alpha-D-muramoyl-L-alanyl-D-glutamate + ADP + phosphate + H(+). The protein operates within cell wall biogenesis; peptidoglycan biosynthesis. Cell wall formation. Catalyzes the addition of glutamate to the nucleotide precursor UDP-N-acetylmuramoyl-L-alanine (UMA). The chain is UDP-N-acetylmuramoylalanine--D-glutamate ligase from Bacillus anthracis (strain A0248).